We begin with the raw amino-acid sequence, 748 residues long: MELEKVKINSLHCNDAVLSSLQASPSATSPQSVPSKANVVTEASIIEKTNQPHNVQEDNNYNRDCDSPESSSSEQDKELDDLRNLHSSSLTNSVVVGKSTGSLNGVYSITSVTSETKTLESVVTTNSASGSACLSNTPTADHIKKRIPSSRTPTRKALRIKFYRNGDRFYPGITIPVSNERYRSFERLFEDLTRLLEENVKIPGAVRTIYNLCGKKITSLDELEDGQSYVCSCNNENFKKVEYNTGSQPLSNLPLSNSRSNSHRLAKCRPSSPLKNGLLAGSSPFPACGGGTGNGSPLIASRLSDRVTVVHPRIVTLIRSGTKPRRIMRLLLNKRNSPSFDHVLTAITQVVRLDTGYVRKVFTLSGIPVVRLSDFFGSDDVFFAYGTERINTAEDFKLEAEEQRAINVIRKTMRTTGTTCKGPKPKMPIKSKKVYPPLVDSEPFKAETTPEDDRHAALLTSTGMEINELPSNIRNTYSLGRIIGDGNFAIVFKIKHRQTGHSYALKIIDKNKCKGKEHYIDAEVRVMKKLNHPHIISLILSVDQNTNMYLVLEYVSGGDLFDAITQVTRFSENQSRIMIRHLGAAMTYLHSMGIVHRDIKPENLLVKLDEHGNVLELKLADFGLACEVNDLLYAVCGTPTYVAPEILLEVGYGLKIDVWAAGIILYILLCGFPPFVAPDNQQEPLFDAIISGIYEFPDPYWSDIGDGVRDLIANMLQADPDVRFTSEDILDHSWTIGNKGNECTTYKR.

Polar residues-rich tracts occupy residues 22-35 and 47-59; these read QASP…SVPS and EKTN…QEDN. Disordered regions lie at residues 22-41 and 47-81; these read QASP…NVVT and EKTN…ELDD. 6 positions are modified to phosphoserine: serine 67, serine 70, serine 73, serine 87, serine 88, and serine 89. Threonine 91 is modified (phosphothreonine). At serine 93 the chain carries Phosphoserine. The residue at position 100 (threonine 100) is a Phosphothreonine. 2 consecutive Doublecortin domains span residues 158 to 244 and 313 to 396; these read LRIK…VEYN and RIVT…AEDF. A Protein kinase domain is found at 477–735; the sequence is YSLGRIIGDG…SEDILDHSWT (259 aa). Residues 483-491 and lysine 506 contribute to the ATP site; that span reads IGDGNFAIV. Residue aspartate 598 is the Proton acceptor of the active site.

The protein belongs to the protein kinase superfamily. CAMK Ser/Thr protein kinase family. CaMK subfamily.

The enzyme catalyses L-seryl-[protein] + ATP = O-phospho-L-seryl-[protein] + ADP + H(+). It carries out the reaction L-threonyl-[protein] + ATP = O-phospho-L-threonyl-[protein] + ADP + H(+). In Drosophila melanogaster (Fruit fly), this protein is Serine/threonine-protein kinase CG17528.